The sequence spans 244 residues: 5-oxoprolinase subunit A (244 aa).

This sequence belongs to the LamB/PxpA family. In terms of assembly, forms a complex composed of PxpA, PxpB and PxpC.

The enzyme catalyses 5-oxo-L-proline + ATP + 2 H2O = L-glutamate + ADP + phosphate + H(+). Its function is as follows. Catalyzes the cleavage of 5-oxoproline to form L-glutamate coupled to the hydrolysis of ATP to ADP and inorganic phosphate. The polypeptide is 5-oxoprolinase subunit A (Salmonella newport (strain SL254)).